Reading from the N-terminus, the 871-residue chain is DNA mismatch repair protein MutS (871 aa).

630 to 637 (GPNMGGKS) contacts ATP. The tract at residues 830 to 849 (KEEPESKSASPVEAALAGIN) is disordered.

This sequence belongs to the DNA mismatch repair MutS family.

This protein is involved in the repair of mismatches in DNA. It is possible that it carries out the mismatch recognition step. This protein has a weak ATPase activity. The protein is DNA mismatch repair protein MutS of Verminephrobacter eiseniae (strain EF01-2).